We begin with the raw amino-acid sequence, 468 residues long: SVGFKAGVKEYKLTYYTPEYQTKDTDILAAFRVTPQPGVPPEEAGAAVAAESSTGTWTTVWTDGLTSLDRYKGRCYRIERVVGEKDQYIAYVAYPLDLFEEGSVTNMFTSIVGNVFGFKALRALRLEDLRIPPAYVKTFQGPPHGIQVERDKLNKYGRPLLGCTIKPKLGLSAKNYGRAVYECLRGGLDFTKDDENVNSQPFMRWRDRFLFCAEALFKAQVETGEIKGHYLNATAGTCEEMIKRAVFARELGVPIVMHDYLTGGFTANTSLAHYCRDNGLLLHIHRAMHAVIDRQKNHGIHFRVLAKALRMSGGDHIHSGTVVGKLEGERDITLGFVDLLRDDFVEQDRSRGIYFTQDWVSLPGVLPVASGGIHVWHMPALTEIFGDDSVLQFGGGTLGHPWGNAPGAVANRVALEACVKARNEGRDLAREGNEIIREASKWSPELAAACEVWKEIVFNFAAVDVLDK.

N6,N6,N6-trimethyllysine is present on Lys-5. Positions 114 and 164 each coordinate substrate. The active-site Proton acceptor is Lys-166. Lys-168 is a substrate binding site. Residues Lys-192, Asp-194, and Glu-195 each contribute to the Mg(2+) site. Position 192 is an N6-carboxylysine (Lys-192). His-285 acts as the Proton acceptor in catalysis. The substrate site is built by Arg-286, His-318, and Ser-370.

Belongs to the RuBisCO large chain family. Type I subfamily. As to quaternary structure, heterohexadecamer of 8 large chains and 8 small chains; disulfide-linked. The disulfide link is formed within the large subunit homodimers. The cofactor is Mg(2+). In terms of processing, the disulfide bond which can form in the large chain dimeric partners within the hexadecamer appears to be associated with oxidative stress and protein turnover.

It is found in the plastid. The protein resides in the chloroplast. The catalysed reaction is 2 (2R)-3-phosphoglycerate + 2 H(+) = D-ribulose 1,5-bisphosphate + CO2 + H2O. It catalyses the reaction D-ribulose 1,5-bisphosphate + O2 = 2-phosphoglycolate + (2R)-3-phosphoglycerate + 2 H(+). Functionally, ruBisCO catalyzes two reactions: the carboxylation of D-ribulose 1,5-bisphosphate, the primary event in carbon dioxide fixation, as well as the oxidative fragmentation of the pentose substrate in the photorespiration process. Both reactions occur simultaneously and in competition at the same active site. This chain is Ribulose bisphosphate carboxylase large chain, found in Datura stramonium (Jimsonweed).